A 653-amino-acid chain; its full sequence is Calpain-10 (653 aa).

Positions 13–321 (LFRDAAFPAA…FDEITIGYPI (309 aa)) constitute a Calpain catalytic domain. Catalysis depends on residues C73, H238, and N263. Domain III stretches follow at residues 322-494 (TEAG…VSLS) and 513-653 (EWGT…PSWQ).

It belongs to the peptidase C2 family.

Its function is as follows. Calcium-regulated non-lysosomal thiol-protease which catalyzes limited proteolysis of substrates involved in cytoskeletal remodeling and signal transduction. May play a role in insulin-stimulated glucose uptake. This is Calpain-10 (CAPN10) from Macaca fascicularis (Crab-eating macaque).